The primary structure comprises 414 residues: NAD-specific glutamate dehydrogenase (414 aa).

2 residues coordinate substrate: lysine 70 and lysine 94. Lysine 106 acts as the Proton donor in catalysis. NAD(+)-binding residues include threonine 190 and asparagine 221. Serine 348 contributes to the substrate binding site.

It belongs to the Glu/Leu/Phe/Val dehydrogenases family. As to quaternary structure, homohexamer.

The enzyme catalyses L-glutamate + NAD(+) + H2O = 2-oxoglutarate + NH4(+) + NADH + H(+). The protein is NAD-specific glutamate dehydrogenase (gluD) of Staphylococcus aureus (strain COL).